A 402-amino-acid chain; its full sequence is 26S proteasome non-ATPase regulatory subunit 4 homolog (402 aa).

Residues 5–189 enclose the VWFA domain; the sequence is ATMICIDNSE…LSDVLISTPI (185 aa). Positions 221 to 240 constitute a UIM 1 domain; it reads NVDPELALALRLSMEEERAR. Basic and acidic residues predominate over residues 241–261; it reads QEAIAKKAAEESSGAENKDHA. Disordered stretches follow at residues 241–292 and 302–321; these read QEAI…EDDD and MSME…MAEA. 2 consecutive UIM domains span residues 291–310 and 323–342; these read DDAQ…GSSG and VDDQ…AGGS. Residues 363–402 form a disordered region; sequence SLPGVDPNDPSVKDLLASLHGQGEQEKKEDKSDKPEDEKK. Over residues 385–402 the composition is skewed to basic and acidic residues; it reads GEQEKKEDKSDKPEDEKK.

The protein belongs to the proteasome subunit S5A family. As to quaternary structure, component of the 19S regulatory particle (RP/PA700) base subcomplex of the 26S proteasome. The 26S proteasome is composed of a core protease (CP), known as the 20S proteasome, capped at one or both ends by the 19S regulatory particle (RP/PA700). The RP/PA700 complex is composed of at least 17 different subunits in two subcomplexes, the base and the lid, which form the portions proximal and distal to the 20S proteolytic core, respectively. Interacts with PI4KG4.

In terms of biological role, plays a role in maintaining the structural integrity of the 19S regulatory particle (RP), subcomplex of the 26S proteasome. Plays a major role in both the direct and indirect recognition of ubiquitinated substrates of ubiquitin/26S proteasome-mediated proteolysis (UPP). Binds and presumably selects ubiquitin-conjugates for destruction. This chain is 26S proteasome non-ATPase regulatory subunit 4 homolog, found in Oryza sativa subsp. japonica (Rice).